We begin with the raw amino-acid sequence, 459 residues long: ATP-dependent protease ATPase subunit HslU (459 aa).

Residues Val-21, 63-68 (GVGKTE), Asp-273, Glu-338, and Arg-410 contribute to the ATP site.

This sequence belongs to the ClpX chaperone family. HslU subfamily. As to quaternary structure, a double ring-shaped homohexamer of HslV is capped on each side by a ring-shaped HslU homohexamer. The assembly of the HslU/HslV complex is dependent on binding of ATP.

The protein localises to the cytoplasm. Its function is as follows. ATPase subunit of a proteasome-like degradation complex; this subunit has chaperone activity. The binding of ATP and its subsequent hydrolysis by HslU are essential for unfolding of protein substrates subsequently hydrolyzed by HslV. HslU recognizes the N-terminal part of its protein substrates and unfolds these before they are guided to HslV for hydrolysis. The polypeptide is ATP-dependent protease ATPase subunit HslU (Thermosipho africanus (strain TCF52B)).